The primary structure comprises 247 residues: tRNA (guanine-N(7)-)-methyltransferase (247 aa).

Residues Gly-70, Glu-93 to Ile-94, Asn-128 to Ala-129, and Leu-148 each bind S-adenosyl-L-methionine. The active site involves Asp-151. Residue Ser-226 to Glu-228 coordinates S-adenosyl-L-methionine.

Belongs to the class I-like SAM-binding methyltransferase superfamily. TrmB family.

It localises to the nucleus. The catalysed reaction is guanosine(46) in tRNA + S-adenosyl-L-methionine = N(7)-methylguanosine(46) in tRNA + S-adenosyl-L-homocysteine. The protein operates within tRNA modification; N(7)-methylguanine-tRNA biosynthesis. Its function is as follows. Catalyzes the formation of N(7)-methylguanine at position 46 (m7G46) in tRNA. This chain is tRNA (guanine-N(7)-)-methyltransferase, found in Drosophila virilis (Fruit fly).